The sequence spans 156 residues: Snaclec jerdonibitin subunit alpha (156 aa).

The N-terminal stretch at 1-23 is a signal peptide; it reads MGRFIFVSFGLLVVFLSLSGTGA. Disulfide bonds link cysteine 25–cysteine 36, cysteine 53–cysteine 150, and cysteine 125–cysteine 142. In terms of domain architecture, C-type lectin spans 32–151; sequence FRQYCYRVFK…CGQQHLFMCK (120 aa).

It belongs to the snaclec family. In terms of assembly, heterodimer of subunits alpha and beta; disulfide-linked. In terms of tissue distribution, expressed by the venom gland.

The protein resides in the secreted. Functionally, snaclec that dose-dependently inhibits platelet aggregation induced by ristocetin or low-dose thrombin, but not by high-dose thrombin. Binds to GPIbalpha (GP1BA). In vivo, also dose-dependently induces thrombocytopenia of mice and platelet counts remains at very low level even after 18 hours intravenous injection. This Protobothrops jerdonii (Jerdon's pitviper) protein is Snaclec jerdonibitin subunit alpha.